Reading from the N-terminus, the 85-residue chain is uncharacterized protein (85 aa).

The protein resides in the mitochondrion. This is an uncharacterized protein from Paramecium tetraurelia.